We begin with the raw amino-acid sequence, 527 residues long: Peptide chain release factor 3 (527 aa).

Residues 9–277 enclose the tr-type G domain; sequence AKRRTFAIIS…AVVDWAPRPL (269 aa). GTP is bound by residues 18–25, 86–90, and 140–143; these read SHPDAGKT, DTPGH, and NKLD.

It belongs to the TRAFAC class translation factor GTPase superfamily. Classic translation factor GTPase family. PrfC subfamily.

Its subcellular location is the cytoplasm. Its function is as follows. Increases the formation of ribosomal termination complexes and stimulates activities of RF-1 and RF-2. It binds guanine nucleotides and has strong preference for UGA stop codons. It may interact directly with the ribosome. The stimulation of RF-1 and RF-2 is significantly reduced by GTP and GDP, but not by GMP. In Pseudomonas putida (strain W619), this protein is Peptide chain release factor 3.